We begin with the raw amino-acid sequence, 147 residues long: Diaminohydroxyphosphoribosylamino-pyrimidine deaminase (147 aa).

In terms of domain architecture, CMP/dCMP-type deaminase spans 1 to 122 (MKDRFYMTRA…LYLRKKGISV (122 aa)). His50 is a Zn(2+) binding site. The active-site Proton donor is Glu52. Zn(2+)-binding residues include Cys75 and Cys84.

This sequence belongs to the cytidine and deoxycytidylate deaminase family. Requires Zn(2+) as cofactor.

The enzyme catalyses 2,5-diamino-6-hydroxy-4-(5-phosphoribosylamino)-pyrimidine + H2O + H(+) = 5-amino-6-(5-phospho-D-ribosylamino)uracil + NH4(+). Its pathway is cofactor biosynthesis; riboflavin biosynthesis; 5-amino-6-(D-ribitylamino)uracil from GTP: step 2/4. The chain is Diaminohydroxyphosphoribosylamino-pyrimidine deaminase (ribD1) from Buchnera aphidicola subsp. Schizaphis graminum (strain Sg).